We begin with the raw amino-acid sequence, 176 residues long: Adenylyl-sulfate kinase (176 aa).

12–19 (GLSGAGKT) is a binding site for ATP. The Phosphoserine intermediate role is filled by S86.

Belongs to the APS kinase family.

It catalyses the reaction adenosine 5'-phosphosulfate + ATP = 3'-phosphoadenylyl sulfate + ADP + H(+). It functions in the pathway sulfur metabolism; hydrogen sulfide biosynthesis; sulfite from sulfate: step 2/3. Its function is as follows. Catalyzes the synthesis of activated sulfate. In Synechococcus sp. (strain JA-3-3Ab) (Cyanobacteria bacterium Yellowstone A-Prime), this protein is Adenylyl-sulfate kinase.